A 455-amino-acid polypeptide reads, in one-letter code: Retinoic acid receptor beta (455 aa).

Residues 1-87 form a modulating region; sequence MTTSSRTCPV…PLPPPRVYKP (87 aa). The interval 45–78 is disordered; that stretch reads QSHPPTSGCSTPSPASVETQSTSSEELVPSPPSP. A compositionally biased stretch (polar residues) spans 47–66; that stretch reads HPPTSGCSTPSPASVETQST. 2 NR C4-type zinc fingers span residues 88 to 108 and 124 to 148; these read CFVC…CEGC and CHRD…LQKC. A DNA-binding region (nuclear receptor) is located at residues 88–153; the sequence is CFVCQDKSSG…RLQKCFEVGM (66 aa). The tract at residues 154–182 is hinge; sequence SKESVRNDRNKKKKEPTKQESTENYEMTA. Residues 183 to 417 enclose the NR LBD domain; sequence ELDDLTEKIR…PLIQEMLENS (235 aa). The segment at 416–455 is disordered; sequence NSEGHEPLTPTSNGNTAEHSPSISPSSVDNSSVSQSPMVQ. Polar residues predominate over residues 424 to 434; sequence TPTSNGNTAEH. Residues 435 to 455 show a composition bias toward low complexity; sequence SPSISPSSVDNSSVSQSPMVQ.

This sequence belongs to the nuclear hormone receptor family. NR1 subfamily. As to quaternary structure, heterodimer; with a RXR molecule. Binds DNA preferentially as a RAR/RXR heterodimer. Both isoforms expressed in heart, lung, kidney, liver, brain, lung and testis. Isoform Beta-1 is highly expressed in testes and brain. Levels increase during testes maturation. Isoform beta-2 is predominant in heart, kidney and lung.

It localises to the nucleus. Receptor for retinoic acid. Retinoic acid receptors bind as heterodimers to their target response elements in response to their ligands, all-trans or 9-cis retinoic acid, and regulate gene expression in various biological processes. The RAR/RXR heterodimers bind to the retinoic acid response elements (RARE) composed of tandem 5'-AGGTCA-3' sites known as DR1-DR5. May be required for Sertoli cell differentiation and spermatogenesis. This is Retinoic acid receptor beta (RARB) from Coturnix japonica (Japanese quail).